The chain runs to 267 residues: Phosphonoacetaldehyde hydrolase (267 aa).

Asp-10 functions as the Nucleophile in the catalytic mechanism. Mg(2+)-binding residues include Asp-10 and Ala-12. The Schiff-base intermediate with substrate role is filled by Lys-51. A Mg(2+)-binding site is contributed by Asp-184.

This sequence belongs to the HAD-like hydrolase superfamily. PhnX family. In terms of assembly, homodimer. Mg(2+) serves as cofactor.

It carries out the reaction phosphonoacetaldehyde + H2O = acetaldehyde + phosphate + H(+). Its function is as follows. Involved in phosphonate degradation. The sequence is that of Phosphonoacetaldehyde hydrolase from Paraburkholderia xenovorans (strain LB400).